The primary structure comprises 510 residues: MEFSTKALDWSKAGQNGFLATKTDCLVVGVFEGQNLAGVAKALDVATKGLVARLLKQGDFEGKRGTQLTLHEVAGVGAARVLLVGLGKEADFNDKAFAEAVRTAVRALSSTRATSALWCLSQQPPQQRDIGWAVITTISLVRDAGYRLLERHPGLKRANGKPGAADKATLRKVVLAVDANDAKAATQAVVRGTAIANGMELTRDLGNLPSNICTPTYLANTARAIAKRHKLKVEVLGRKQIEALNMGSFLAVTKGSVEPPQFIVLRYDGAGAKQAPVVLVGKGITFDTGGISLKPGEGMDEMKYDMCGAASVLGTLQAVAEMGLKLNVIAVVPTCENMPSGVATKPGDVVTSMSGQTIEILNTDAEGRLILCDALTYVERFKPAAVVDVATLTGACIIALGHINTGLYARSDMLADQLLQAGRKSMDTAWRMPLDDEYQDQLKSNFADMANIGGRPAGSVTAACFLARFTEKYDWAHLDIAGTAWKSGAAKGATGRPVPLLTQFLMDRAA.

Lys-282 and Asp-287 together coordinate Mn(2+). Lys-294 is an active-site residue. Mn(2+) is bound by residues Asp-305, Asp-364, and Glu-366. The active site involves Arg-368.

The protein belongs to the peptidase M17 family. Requires Mn(2+) as cofactor.

It localises to the cytoplasm. The catalysed reaction is Release of an N-terminal amino acid, Xaa-|-Yaa-, in which Xaa is preferably Leu, but may be other amino acids including Pro although not Arg or Lys, and Yaa may be Pro. Amino acid amides and methyl esters are also readily hydrolyzed, but rates on arylamides are exceedingly low.. It carries out the reaction Release of an N-terminal amino acid, preferentially leucine, but not glutamic or aspartic acids.. Presumably involved in the processing and regular turnover of intracellular proteins. Catalyzes the removal of unsubstituted N-terminal amino acids from various peptides. This Cupriavidus pinatubonensis (strain JMP 134 / LMG 1197) (Cupriavidus necator (strain JMP 134)) protein is Probable cytosol aminopeptidase.